A 202-amino-acid chain; its full sequence is Glycerol-3-phosphate acyltransferase (202 aa).

4 helical membrane-spanning segments follow: residues 2–22 (ANLLFALAAYLIGSVSFAVVV), 85–105 (LAMVALAVFLGHLFPVFHRFA), 119–139 (AINPILGLATLATWVIIAFFF), and 158–178 (VLMEGIDAMAGAVLIIAILLI).

The protein belongs to the PlsY family. As to quaternary structure, probably interacts with PlsX.

The protein resides in the cell inner membrane. The catalysed reaction is an acyl phosphate + sn-glycerol 3-phosphate = a 1-acyl-sn-glycero-3-phosphate + phosphate. It functions in the pathway lipid metabolism; phospholipid metabolism. Functionally, catalyzes the transfer of an acyl group from acyl-phosphate (acyl-PO(4)) to glycerol-3-phosphate (G3P) to form lysophosphatidic acid (LPA). This enzyme utilizes acyl-phosphate as fatty acyl donor, but not acyl-CoA or acyl-ACP. This is Glycerol-3-phosphate acyltransferase from Cupriavidus pinatubonensis (strain JMP 134 / LMG 1197) (Cupriavidus necator (strain JMP 134)).